Reading from the N-terminus, the 262-residue chain is ATP synthase subunit a 1 (262 aa).

A run of 5 helical transmembrane segments spans residues 30–50, 91–111, 131–151, 201–221, and 232–252; these read TVHI…ILVF, IAPL…MDLI, IVPT…FALM, LFGN…LMPW, and AIFH…LTIV.

Belongs to the ATPase A chain family. F-type ATPases have 2 components, CF(1) - the catalytic core - and CF(0) - the membrane proton channel. CF(1) has five subunits: alpha(3), beta(3), gamma(1), delta(1), epsilon(1). CF(0) has three main subunits: a(1), b(2) and c(9-12). The alpha and beta chains form an alternating ring which encloses part of the gamma chain. CF(1) is attached to CF(0) by a central stalk formed by the gamma and epsilon chains, while a peripheral stalk is formed by the delta and b chains.

It is found in the cell inner membrane. Functionally, key component of the proton channel; it plays a direct role in the translocation of protons across the membrane. The polypeptide is ATP synthase subunit a 1 (Photobacterium profundum (strain SS9)).